Reading from the N-terminus, the 837-residue chain is Phenylalanine--tRNA ligase beta subunit (837 aa).

One can recognise a tRNA-binding domain in the interval 39–149 (SASLEGIVTG…EMNIAIPKIG (111 aa)). The B5 domain occupies 415-520 (IEEQLLLLRR…RLIGYDRFDS (106 aa)). Mg(2+) is bound by residues Asp-498, Asp-504, Glu-507, and Glu-508. Residues 743 to 836 (PTVPSMERDI…LKVEFSAELR (94 aa)) form the FDX-ACB domain.

Belongs to the phenylalanyl-tRNA synthetase beta subunit family. Type 1 subfamily. In terms of assembly, tetramer of two alpha and two beta subunits. Mg(2+) serves as cofactor.

The protein resides in the cytoplasm. The catalysed reaction is tRNA(Phe) + L-phenylalanine + ATP = L-phenylalanyl-tRNA(Phe) + AMP + diphosphate + H(+). This Prochlorococcus marinus (strain SARG / CCMP1375 / SS120) protein is Phenylalanine--tRNA ligase beta subunit.